A 517-amino-acid chain; its full sequence is Bifunctional purine biosynthesis protein PurH (517 aa).

An MGS-like domain is found at 1–146; sequence MGRLVLLSVS…KNFAHLTVLC (146 aa).

Belongs to the PurH family.

The enzyme catalyses (6R)-10-formyltetrahydrofolate + 5-amino-1-(5-phospho-beta-D-ribosyl)imidazole-4-carboxamide = 5-formamido-1-(5-phospho-D-ribosyl)imidazole-4-carboxamide + (6S)-5,6,7,8-tetrahydrofolate. It carries out the reaction IMP + H2O = 5-formamido-1-(5-phospho-D-ribosyl)imidazole-4-carboxamide. It participates in purine metabolism; IMP biosynthesis via de novo pathway; 5-formamido-1-(5-phospho-D-ribosyl)imidazole-4-carboxamide from 5-amino-1-(5-phospho-D-ribosyl)imidazole-4-carboxamide (10-formyl THF route): step 1/1. Its pathway is purine metabolism; IMP biosynthesis via de novo pathway; IMP from 5-formamido-1-(5-phospho-D-ribosyl)imidazole-4-carboxamide: step 1/1. This Gloeothece citriformis (strain PCC 7424) (Cyanothece sp. (strain PCC 7424)) protein is Bifunctional purine biosynthesis protein PurH.